Consider the following 409-residue polypeptide: uncharacterized protein (409 aa).

3 disordered regions span residues 12 to 32 (ENTE…LHCP), 133 to 160 (EVST…SREQ), and 194 to 213 (TVSS…GLST). Polar residues predominate over residues 134 to 160 (VSTQKSWSSEKNWSGLSQGPGTASREQ).

This is an uncharacterized protein from Mus musculus (Mouse).